We begin with the raw amino-acid sequence, 252 residues long: Aspartate/glutamate leucyltransferase (252 aa).

The protein belongs to the R-transferase family. Bpt subfamily.

It localises to the cytoplasm. The enzyme catalyses N-terminal L-glutamyl-[protein] + L-leucyl-tRNA(Leu) = N-terminal L-leucyl-L-glutamyl-[protein] + tRNA(Leu) + H(+). It catalyses the reaction N-terminal L-aspartyl-[protein] + L-leucyl-tRNA(Leu) = N-terminal L-leucyl-L-aspartyl-[protein] + tRNA(Leu) + H(+). Its function is as follows. Functions in the N-end rule pathway of protein degradation where it conjugates Leu from its aminoacyl-tRNA to the N-termini of proteins containing an N-terminal aspartate or glutamate. This is Aspartate/glutamate leucyltransferase from Polynucleobacter necessarius subsp. necessarius (strain STIR1).